The primary structure comprises 380 residues: Cytochrome b (380 aa).

Helical transmembrane passes span 34–54, 78–99, 114–134, and 179–199; these read FGSL…LLAM, WLIR…YMHI, WNTG…GYVL, and FFAL…IHLT. Positions 84 and 98 each coordinate heme b. Residues His183 and His197 each coordinate heme b. His202 contacts a ubiquinone. 4 consecutive transmembrane segments (helical) span residues 227-247, 289-309, 321-341, and 348-368; these read LKDI…ALFS, LGGV…PFLH, LSQS…WIGS, and FIII…ILFP.

Belongs to the cytochrome b family. In terms of assembly, the cytochrome bc1 complex contains 11 subunits: 3 respiratory subunits (MT-CYB, CYC1 and UQCRFS1), 2 core proteins (UQCRC1 and UQCRC2) and 6 low-molecular weight proteins (UQCRH/QCR6, UQCRB/QCR7, UQCRQ/QCR8, UQCR10/QCR9, UQCR11/QCR10 and a cleavage product of UQCRFS1). This cytochrome bc1 complex then forms a dimer. Heme b is required as a cofactor.

Its subcellular location is the mitochondrion inner membrane. Its function is as follows. Component of the ubiquinol-cytochrome c reductase complex (complex III or cytochrome b-c1 complex) that is part of the mitochondrial respiratory chain. The b-c1 complex mediates electron transfer from ubiquinol to cytochrome c. Contributes to the generation of a proton gradient across the mitochondrial membrane that is then used for ATP synthesis. The protein is Cytochrome b (MT-CYB) of Oceanodroma tristrami (Tristram's storm-petrel).